Reading from the N-terminus, the 201-residue chain is ATP-dependent Clp protease proteolytic subunit (201 aa).

Residue S98 is the Nucleophile of the active site. H123 is a catalytic residue.

Belongs to the peptidase S14 family. Fourteen ClpP subunits assemble into 2 heptameric rings which stack back to back to give a disk-like structure with a central cavity, resembling the structure of eukaryotic proteasomes.

Its subcellular location is the cytoplasm. The enzyme catalyses Hydrolysis of proteins to small peptides in the presence of ATP and magnesium. alpha-casein is the usual test substrate. In the absence of ATP, only oligopeptides shorter than five residues are hydrolyzed (such as succinyl-Leu-Tyr-|-NHMec, and Leu-Tyr-Leu-|-Tyr-Trp, in which cleavage of the -Tyr-|-Leu- and -Tyr-|-Trp bonds also occurs).. Cleaves peptides in various proteins in a process that requires ATP hydrolysis. Has a chymotrypsin-like activity. Plays a major role in the degradation of misfolded proteins. The sequence is that of ATP-dependent Clp protease proteolytic subunit from Rickettsia felis (strain ATCC VR-1525 / URRWXCal2) (Rickettsia azadi).